We begin with the raw amino-acid sequence, 87 residues long: Small ribosomal subunit protein uS15 (87 aa).

This sequence belongs to the universal ribosomal protein uS15 family. As to quaternary structure, part of the 30S ribosomal subunit. Forms a bridge to the 50S subunit in the 70S ribosome, contacting the 23S rRNA.

Its function is as follows. One of the primary rRNA binding proteins, it binds directly to 16S rRNA where it helps nucleate assembly of the platform of the 30S subunit by binding and bridging several RNA helices of the 16S rRNA. Forms an intersubunit bridge (bridge B4) with the 23S rRNA of the 50S subunit in the ribosome. The protein is Small ribosomal subunit protein uS15 of Alkaliphilus metalliredigens (strain QYMF).